The following is a 500-amino-acid chain: Glucokinase-1 (500 aa).

Serine 2 bears the N-acetylserine mark. Serine 2 is subject to Phosphoserine. The region spanning 12-498 is the Hexokinase domain; that stretch reads RAVIQAVDQI…SGVGAALCAL (487 aa). Positions 74 to 216 are hexokinase small subdomain; the sequence is NGTERGVLLA…MPMIKVVALT (143 aa). Residue lysine 110 coordinates ATP. The glucose-binding stretch occupies residues 158-184; that stretch reads KLGFTFSYPVDQTSLNSGTLIRWTKGF. A hexokinase large subdomain region spans residues 217 to 487; that stretch reads NDTVGTYLSH…RKVHLKIAKD (271 aa). At serine 470 the chain carries Phosphoserine. 487-492 contributes to the ATP binding site; the sequence is DGSGVG.

The protein belongs to the hexokinase family. As to quaternary structure, monomer.

It catalyses the reaction D-glucose + ATP = D-glucose 6-phosphate + ADP + H(+). The protein operates within carbohydrate metabolism; hexose metabolism. Its pathway is carbohydrate degradation; glycolysis; D-glyceraldehyde 3-phosphate and glycerone phosphate from D-glucose: step 1/4. Its function is as follows. Two isoenzymes, hexokinase-1 and hexokinase-2, can phosphorylate keto- and aldohexoses in yeast, whereas a third isoenzyme, GLK, is specific for aldohexoses. All glucose phosphorylating enzymes are involved in glucose uptake. This chain is Glucokinase-1 (GLK1), found in Saccharomyces cerevisiae (strain ATCC 204508 / S288c) (Baker's yeast).